We begin with the raw amino-acid sequence, 104 residues long: Nucleoid-associated protein Ccon26_18480 (104 aa).

The segment covering 16–34 (DVQKQAKQMEEESKNKEFG) has biased composition (basic and acidic residues). The tract at residues 16 to 38 (DVQKQAKQMEEESKNKEFGAKSG) is disordered.

It belongs to the YbaB/EbfC family. Homodimer.

The protein resides in the cytoplasm. The protein localises to the nucleoid. Its function is as follows. Binds to DNA and alters its conformation. May be involved in regulation of gene expression, nucleoid organization and DNA protection. This Campylobacter concisus (strain 13826) protein is Nucleoid-associated protein Ccon26_18480.